We begin with the raw amino-acid sequence, 438 residues long: uncharacterized protein (438 aa).

This is an uncharacterized protein from Acanthamoeba polyphaga mimivirus (APMV).